The chain runs to 164 residues: Coenzyme Q-binding protein coq10, mitochondrial (164 aa).

This sequence belongs to the COQ10 family. As to quaternary structure, interacts with coenzyme Q.

The protein localises to the mitochondrion inner membrane. Required for the function of coenzyme Q in the respiratory chain. May serve as a chaperone or may be involved in the transport of Q6 from its site of synthesis to the catalytic sites of the respiratory complexes. The polypeptide is Coenzyme Q-binding protein coq10, mitochondrial (Schizosaccharomyces pombe (strain 972 / ATCC 24843) (Fission yeast)).